A 71-amino-acid chain; its full sequence is Transcription modulator YdgT (71 aa).

It belongs to the Hha/YmoA/Cnu family. In terms of assembly, forms complexes with both H-NS and StpA.

Binds to H-NS and modified the range of genes it silences; H-NS alonge silences core gene while the H-NS-Hha complex (and presumably also H-NS-YdgT) silences genes acquired by horizontal gene transfer. Plays a role silencing virulence factors in the absence of factors that induce pathogenicity. The complex formed with H-NS binds to the specific 26-bp cnb site in the origin of replication oriC. In Salmonella choleraesuis (strain SC-B67), this protein is Transcription modulator YdgT (ydgT).